The following is a 536-amino-acid chain: Caspase recruitment domain-containing protein 9 (536 aa).

Serine 2 carries the post-translational modification Phosphoserine. Positions 3, 10, and 73 each coordinate Zn(2+). In terms of domain architecture, CARD spans 6 to 98 (NDDECWSTLE…QLYRKVTGKE (93 aa)). The interval 99–116 (PARVFSMIIDASGESGLT) is linker. A coiled-coil region spans residues 117 to 272 (QLLMTEVMKL…ELQVSVQEGK (156 aa)). Lysine 125 participates in a covalent cross-link: Glycyl lysine isopeptide (Lys-Gly) (interchain with G-Cter in ubiquitin). Residue threonine 231 is modified to Phosphothreonine; by PKC/PRKCD. Serine 277 carries the phosphoserine modification. The stretch at 303-415 (SLRKDLRQAE…LLAAEGRLKQ (113 aa)) forms a coiled coil. A phosphoserine mark is found at serine 424, serine 425, serine 431, serine 451, serine 461, serine 483, and serine 498. Residues 425-451 (SDLEDSSPRNSQELSLPQDLEEDAQLS) are disordered. The segment at 476-536 (LTHGMGPSSS…GSDNTDTEGS (61 aa)) is disordered. Residues 487-502 (PPEKERRRLKESFENY) are compositionally biased toward basic and acidic residues. Threonine 531 and threonine 533 each carry phosphothreonine; by CK2.

As to quaternary structure, monomer. Homodimer; homodimerization is mediated by the CARD domain which forms an extensive interaction with the adjacent linker and coiled-coil regions; leads to an autoinhibited state. Homomultimer; polymerizes following activation, forming a nucleating helical template that seeds BCL10-filament formation via a CARD-CARD interaction. Interacts (via CARD domain) with BCL10 (via CARD domain); interaction takes place following CARD9 activation and polymerization, leading to the formation of a filamentous CBM complex assembly. Component of a CBM complex (CARD9-BCL10, MALT1), composed of CARD9, BCL10 and MALT1. Interacts with RASGRF1. Interacts with NOD2 (via NACHT domain); interaction is direct. Interacts with RIPK2. Interacts with VHL; without leading to protein degradation. Phosphorylated at Thr-231 by PRKCD downstream of C-type lectin receptors activation: phosphorylation promotes interaction with BCL10, followed by activation of NF-kappa-B and MAP kinase p38 pathways. Phosphorylated at Thr-531 and Thr-531 by CK2 following interaction with VHL, leading to inhibit the ability to activate NF-kappa-B. Post-translationally, ubiquitinated at Lys-125 via 'Lys-27'-linked ubiquitin by TRIM62 downstream of C-type lectin receptors activation; leading to CARD9 activation, followed by activation of NF-kappa-B and MAP kinase p38 pathways. Deubiquitinated at Lys-125 by USP15, inhibiting CARD9. Specifically expressed in myeloid cells. Not expressed in non-lymphoid organs.

It localises to the cytoplasm. Maintained in an autoinhibited state via homodimerization in which the CARD domain forms an extensive interaction with the adjacent linker and coiled-coil regions. Activation downstream of C-type lectin receptors, by phosphorylation by PRKCD and/or ubiquitination by TRIM62, triggers disruption of the CARD domain-coiled coil interface, CARD9 homooligomerization and BCL10 recruitment, followed by activation of NF-kappa-B and MAP kinase p38 pathways. Zinc-binding inhibits activation by stabilizing the CARD ground-state conformation and restricting its capacity to form BCL10-nucleating filaments. Functionally, adapter protein that plays a key role in innate immune response against fungi by forming signaling complexes downstream of C-type lectin receptors. CARD9-mediated signals are essential for antifungal immunity against a subset of fungi from the phylum Ascomycota. Transduces signals in myeloid cells downstream of C-type lectin receptors CLEC7A (dectin-1), CLEC6A (dectin-2) and CLEC4E (Mincle), which detect pathogen-associated molecular pattern metabolites (PAMPs), such as fungal carbohydrates, and trigger CARD9 activation. Upon activation, CARD9 homooligomerizes to form a nucleating helical template that recruits BCL10 via CARD-CARD interaction, thereby promoting polymerization of BCL10 and subsequent recruitment of MALT1: this leads to activation of NF-kappa-B and MAP kinase p38 (MAPK11, MAPK12, MAPK13 and/or MAPK14) pathways which stimulate expression of genes encoding pro-inflammatory cytokines and chemokines. CARD9 signaling in antigen-presenting cells links innate sensing of fungi to the activation of adaptive immunity and provides a cytokine milieu that induces the development and subsequent of interleukin 17-producing T helper (Th17) cells. Also involved in activation of myeloid cells via classical ITAM-associated receptors and TLR: required for TLR-mediated activation of MAPK, while it is not required for TLR-induced activation of NF-kappa-B. CARD9 can also be engaged independently of BCL10: forms a complex with RASGRF1 downstream of C-type lectin receptors, which recruits and activates HRAS, leading to ERK activation and the production of cytokines. Acts as an important regulator of the intestinal commensal fungi (mycobiota) component of the gut microbiota. Plays an essential role in antifungal immunity against dissemination of gut fungi: acts by promoting induction of antifungal IgG antibodies response in CX3CR1(+) macrophages to confer protection against disseminated C.albicans or C.auris infection. Also mediates immunity against other pathogens, such as certain bacteria, viruses and parasites; CARD9 signaling is however redundant with other innate immune responses. In response to L.monocytogenes infection, required for the production of inflammatory cytokines activated by intracellular peptidoglycan: acts by connecting NOD2 recognition of peptidoglycan to downstream activation of MAP kinases (MAPK) without activating NF-kappa-B. In Mus musculus (Mouse), this protein is Caspase recruitment domain-containing protein 9.